Reading from the N-terminus, the 582-residue chain is Transcription factor tau subunit sfc6 (582 aa).

Residues 1–97 (MGPKSKEYEN…SAKKQSSKGL (97 aa)) are disordered. The span at 18 to 39 (EDNDDDGDFVLENVMSEEDIEI) shows a compositional bias: acidic residues. A compositionally biased stretch (polar residues) spans 63–87 (QPLTPSSSKGAGNEPKSQNSSTTRG). WD repeat units lie at residues 221–262 (TQFL…NFKS), 268–314 (HDWG…VKFH), and 326–369 (FNDS…ECPL).

As to quaternary structure, component of the TFIIIC complex including sfc1, sfc3, sfc4, sfc6 and sfc7. The subunits are organized in two globular domains, tauA and tauB, connected by a proteolysis-sensitive and flexible linker. Interacts with sfc1, sfc3 and sfc4.

The protein localises to the nucleus. In terms of biological role, TFIIIC mediates tRNA and 5S RNA gene activation by binding to intragenic promoter elements. Upstream of the transcription start site, TFIIIC assembles the initiation complex TFIIIB-TFIIIC-tDNA, which is sufficient for RNA polymerase III recruitment and function. Part of the tauB domain of TFIIIC that binds boxB DNA promoter sites of tRNA and similar genes. Cooperates with sfc3 in DNA binding. Localizes to chromatin insulator sequence without recruiting RNA polymerase III and plays a role in nuclear organization. In Schizosaccharomyces pombe (strain 972 / ATCC 24843) (Fission yeast), this protein is Transcription factor tau subunit sfc6.